A 117-amino-acid chain; its full sequence is UPF0375 protein Y45F10C.2 (117 aa).

The N-terminal stretch at 1–20 (MNSFVSTVLLLSVTIALVSG) is a signal peptide.

Belongs to the UPF0375 family. Expressed in the uterine epithelium.

The protein localises to the secreted. In terms of biological role, negatively regulates the egg-laying rate by promoting retention of fertilized eggs. This chain is UPF0375 protein Y45F10C.2, found in Caenorhabditis elegans.